We begin with the raw amino-acid sequence, 1029 residues long: Protein STABILIZED1 (1029 aa).

The region spanning 1-85 (MVFLSIPNGK…VIIHVLLLGG (85 aa)) is the Ubiquitin-like domain. G85 participates in a covalent cross-link: Glycyl lysine isopeptide (Gly-Lys) (interchain with K-? in acceptor proteins). The tract at residues 142 to 170 (AAPGVGRGAGKPSEAEAEDDEEAEEKRYD) is disordered. Residues 210-243 (DSRRKDRREAKLKEEIEKYRASNPKITEQFADLK) are a coiled coil. HAT repeat units follow at residues 367-399 (YDRNRARLLYKSLTQSNPKNPNGWIAAARVEEV), 401-431 (GKIKAARFQIQRGCEECPKNEDVWLEACRLA), 432-462 (NPEDAKGVIAKGVKLIPNSVKLWLEAAKLEH), 463-494 (DVENKSRVLRKGLEHIPDSVRLWKAVVELANE), 496-524 (DARILLHRAVECCPLHLELWVALARLETY), 526-554 (ESKKVLNKAREKLPKEPAIWITAAKLEEA), 639-671 (GSIETARAIYAHALSVFLTKKSIWLKAAQLEKS), 673-705 (GSRESLDALLRKAVTYVPQAEVLWLMGAKEKWL), 707-739 (GDVPAARAILQEAYAAIPNSEEIWLAAFKLEFE), 741-772 (KEPERARMLLAKARERGGTERVWMKSAIVERE), 774-806 (GNVEEERRLLNEGLKQFPTFFKLWLMLGQLEER), 808-840 (KHLEQARKAYDTGLKHCPHCIPLWLSLADLEEK), 842-874 (NGLNKARAILTTARKKNPGGAELWLAAIRAELR), 876-908 (DNKREAEHLMSKALQDCPKSGILWAADIEMAPR), and 940-972 (KKVEKARAWFERAVTVGPDIGDFWALFYKFELQ). A TPR 1 repeat occupies 625 to 658 (KRTWVADADECKKRGSIETARAIYAHALSVFLTK). Residues 794-827 (FKLWLMLGQLEERFKHLEQARKAYDTGLKHCPHC) form a TPR 2 repeat. The TPR 3 repeat unit spans residues 926-959 (PHVTIAVAKLFWQDKKVEKARAWFERAVTVGPDI).

As to quaternary structure, component of a pre-mRNA splicing complex. Interacts with ZOP1. Interacts with PRP31. In terms of tissue distribution, ubiquitous.

The protein resides in the nucleus. The protein localises to the cajal body. In terms of biological role, pre-mRNA splicing factor required for splicing and for the turnover of unstable transcripts. May be a U5 snRNP-associated protein involved in the formation of U4/U6-U5 tri-snRNP. Involved in responses to abiotic stresses. Involved in microRNAs (miRNAs) biogenesis by functioning in primary miRNAs (pri-miRNAs) splicing. Required for DNA methylation and transcriptional silencing through the RNA-directed DNA methylation (RdDM) pathway. The sequence is that of Protein STABILIZED1 (STA1) from Arabidopsis thaliana (Mouse-ear cress).